Here is a 60-residue protein sequence, read N- to C-terminus: Large ribosomal subunit protein uL30 (60 aa).

This sequence belongs to the universal ribosomal protein uL30 family. As to quaternary structure, part of the 50S ribosomal subunit.

The polypeptide is Large ribosomal subunit protein uL30 (Cutibacterium acnes (strain DSM 16379 / KPA171202) (Propionibacterium acnes)).